The sequence spans 103 residues: MEKIRLKLKAYDHRVLDRSVAAIVDAVKRTGAEIRGPIPMPTKMKRYTVLKSPHVNKDAREQFEIRIHGRMIDIVSATSDTIDSLMKLDLAPEIEVEIRSMDK.

This sequence belongs to the universal ribosomal protein uS10 family. Part of the 30S ribosomal subunit.

Involved in the binding of tRNA to the ribosomes. This is Small ribosomal subunit protein uS10 from Sulfurovum sp. (strain NBC37-1).